Here is a 401-residue protein sequence, read N- to C-terminus: Subtilisin-like protease 7 (401 aa).

The N-terminal stretch at 1-20 is a signal peptide; the sequence is MGFITKAIPLALAAASVING. Positions 21–119 are excised as a propeptide; that stretch reads AEILETRAGV…IERDARVQIN (99 aa). The 83-residue stretch at 36–118 folds into the Inhibitor I9 domain; the sequence is KYIVVMNDGM…YIERDARVQI (83 aa). N-linked (GlcNAc...) asparagine glycosylation occurs at N58. Residues 129–401 enclose the Peptidase S8 domain; that stretch reads SWGLARVGSR…SKLINNGSGM (273 aa). Residues D161 and H193 each act as charge relay system in the active site. Residues N223 and N253 are each glycosylated (N-linked (GlcNAc...) asparagine). S347 serves as the catalytic Charge relay system. The N-linked (GlcNAc...) asparagine glycan is linked to N397.

This sequence belongs to the peptidase S8 family.

The protein localises to the secreted. In terms of biological role, secreted subtilisin-like serine protease with keratinolytic activity that contributes to pathogenicity. The chain is Subtilisin-like protease 7 (SUB7) from Trichophyton tonsurans (Scalp ringworm fungus).